The chain runs to 194 residues: Small ribosomal subunit protein uS5 (194 aa).

The S5 DRBM domain maps to 26-89 (LEEKVVEIRR…ADAKKRIIKV (64 aa)).

Belongs to the universal ribosomal protein uS5 family. In terms of assembly, part of the 30S ribosomal subunit. Contacts proteins S4 and S8.

In terms of biological role, with S4 and S12 plays an important role in translational accuracy. Its function is as follows. Located at the back of the 30S subunit body where it stabilizes the conformation of the head with respect to the body. This chain is Small ribosomal subunit protein uS5, found in Sulfurihydrogenibium sp. (strain YO3AOP1).